The following is a 249-amino-acid chain: Segregation and condensation protein A (249 aa).

Belongs to the ScpA family. Component of a cohesin-like complex composed of ScpA, ScpB and the Smc homodimer, in which ScpA and ScpB bind to the head domain of Smc. The presence of the three proteins is required for the association of the complex with DNA.

The protein localises to the cytoplasm. Functionally, participates in chromosomal partition during cell division. May act via the formation of a condensin-like complex containing Smc and ScpB that pull DNA away from mid-cell into both cell halves. The chain is Segregation and condensation protein A from Listeria monocytogenes serotype 4b (strain CLIP80459).